The primary structure comprises 811 residues: Serine/threonine-protein kinase prpf4B (811 aa).

Disordered stretches follow at residues 1-257, 288-341, 353-379, and 408-452; these read MVIE…TNEP, EKYN…NQIE, KDQN…EDLK, and VSIK…TNGG. Residues 46–71 show a composition bias toward low complexity; sequence SSPASRETSSSKLMSPSKNQSSSSSR. The segment covering 81 to 202 has biased composition (basic and acidic residues); sequence RRKDERYSSS…DNMDSRDNKN (122 aa). A compositionally biased stretch (polar residues) spans 203–215; the sequence is GSRQSINNNTLSY. Residues 217 to 240 show a composition bias toward basic and acidic residues; that stretch reads KQADRKDEVRVKDNISVNDDKTNH. 2 stretches are compositionally biased toward polar residues: residues 241–257 and 293–302; these read GENL…TNEP and EQPQPITSSL. Residues 310–327 are compositionally biased toward low complexity; the sequence is SNTNTNSNSTPVATTTTS. One can recognise a Protein kinase domain in the interval 490-808; that stretch reads YQIFSPIGSG…PFEALNHEFL (319 aa). Residues 496-504 and lysine 519 each bind ATP; that span reads IGSGVFSTV. The Proton acceptor role is filled by aspartate 619.

Belongs to the protein kinase superfamily. CMGC Ser/Thr protein kinase family. Post-translationally, phosphorylated. Autophosphorylated; phosphorylation inhibits interaction with its targets.

The protein resides in the nucleus. The protein localises to the chromosome. It localises to the centromere. It is found in the kinetochore. It catalyses the reaction L-seryl-[protein] + ATP = O-phospho-L-seryl-[protein] + ADP + H(+). It carries out the reaction L-threonyl-[protein] + ATP = O-phospho-L-threonyl-[protein] + ADP + H(+). Serine/threonine kinase involved in spliceosomal assembly as well as mitosis and signaling regulation. The sequence is that of Serine/threonine-protein kinase prpf4B (prp4k) from Dictyostelium discoideum (Social amoeba).